We begin with the raw amino-acid sequence, 132 residues long: Regulator of ribonuclease activity B (132 aa).

This sequence belongs to the RraB family. As to quaternary structure, interacts with the C-terminal region of Rne.

The protein resides in the cytoplasm. Globally modulates RNA abundance by binding to RNase E (Rne) and regulating its endonucleolytic activity. Can modulate Rne action in a substrate-dependent manner by altering the composition of the degradosome. This is Regulator of ribonuclease activity B from Alteromonas mediterranea (strain DSM 17117 / CIP 110805 / LMG 28347 / Deep ecotype).